The primary structure comprises 669 residues: L-type lectin-domain containing receptor kinase IV.4 (669 aa).

An N-terminal signal peptide occupies residues 1–23 (MFFIKLFTIFFLSFFWQSLKSSS). The Extracellular portion of the chain corresponds to 24 to 294 (QIIDFTYNGF…TRVYRFYKNW (271 aa)). The tract at residues 26-260 (IDFTYNGFRP…SEIFVLGWSF (235 aa)) is legume-lectin like. Asn-58, Asn-80, Asn-127, Asn-152, and Asn-185 each carry an N-linked (GlcNAc...) asparagine glycan. A helical membrane pass occupies residues 295-315 (VPLISLLLIPFLLIIFLVRFI). Over 316–669 (MKRRRKFAEE…VAYSLLSSGR (354 aa)) the chain is Cytoplasmic. The 278-residue stretch at 350 to 627 (FKDKNILGSG…LQYLRGDAML (278 aa)) folds into the Protein kinase domain. Residues 356 to 364 (LGSGGFGSV) and Lys-379 contribute to the ATP site. The active-site Proton acceptor is Asp-475.

It in the C-terminal section; belongs to the protein kinase superfamily. Ser/Thr protein kinase family. In the N-terminal section; belongs to the leguminous lectin family.

It is found in the cell membrane. It catalyses the reaction L-seryl-[protein] + ATP = O-phospho-L-seryl-[protein] + ADP + H(+). The catalysed reaction is L-threonyl-[protein] + ATP = O-phospho-L-threonyl-[protein] + ADP + H(+). Involved in resistance response to the pathogenic oomycetes Phytophthora infestans and Phytophthora capsici and to the pathogenic bacteria Pseudomonas syringae. The protein is L-type lectin-domain containing receptor kinase IV.4 of Arabidopsis thaliana (Mouse-ear cress).